A 160-amino-acid polypeptide reads, in one-letter code: UPF0178 protein PA5247 (160 aa).

This sequence belongs to the UPF0178 family.

This chain is UPF0178 protein PA5247, found in Pseudomonas aeruginosa (strain ATCC 15692 / DSM 22644 / CIP 104116 / JCM 14847 / LMG 12228 / 1C / PRS 101 / PAO1).